The sequence spans 334 residues: Gap junction alpha-2 protein (334 aa).

The Cytoplasmic portion of the chain corresponds to 1 to 12; the sequence is MAGWELLKLLLD. Residues 13-35 form a helical membrane-spanning segment; sequence DVQEHSTLIGKVWLTVLFIFRIF. The Extracellular segment spans residues 36 to 75; that stretch reads ILSVAGESVWTDEQSDFICNTQQPGCTNVCYDQAFPISHV. A helical membrane pass occupies residues 76-98; the sequence is RYWVLQFLFVSTPTLIYLGHMVY. Residues 99–153 are Cytoplasmic-facing; that stretch reads LSKKEEKERQKENESRILVANEAQTEVHSSATKKIRIQGPLMCTYTTSVVFKSIF. The chain crosses the membrane as a helical span at residues 154 to 176; the sequence is EAGFLLGQWYIYGFVMSPIFVCE. Residues 177–207 lie on the Extracellular side of the membrane; sequence RIPCKHKVECFVSRPMEKTIFIIFMLVVSLI. The helical transmembrane segment at 208–230 threads the bilayer; it reads SLLLNLMELIHLSFKCFQHGIKE. Residues 231-334 lie on the Cytoplasmic side of the membrane; it reads GATCSPTGIP…HQTSSKQQYV (104 aa).

The protein belongs to the connexin family. Alpha-type (group II) subfamily. In terms of assembly, a connexon is composed of a hexamer of connexins. As to expression, resides primarily in the ovary, oocytes and early embryos.

Its subcellular location is the cell membrane. It is found in the cell junction. It localises to the gap junction. One gap junction consists of a cluster of closely packed pairs of transmembrane channels, the connexons, through which materials of low MW diffuse from one cell to a neighboring cell. This Xenopus laevis (African clawed frog) protein is Gap junction alpha-2 protein (gja2).